A 64-amino-acid chain; its full sequence is Large ribosomal subunit protein uL29 (64 aa).

The protein belongs to the universal ribosomal protein uL29 family.

This is Large ribosomal subunit protein uL29 from Coprothermobacter proteolyticus (strain ATCC 35245 / DSM 5265 / OCM 4 / BT).